The sequence spans 391 residues: E1B 55 kDa protein (391 aa).

A Phosphoserine modification is found at Ser-387.

Belongs to the adenoviridae E1B 55 kDa protein family. In terms of assembly, interacts with host PML-4 and PML-5; this interaction promotes efficient subnuclear targeting of E1B-55K to PML nuclear bodies. Interacts with E4-ORF3 protein. Interacts with E4-ORF6 protein.

It is found in the host nucleus. The protein localises to the host cytoplasm. Plays a major role to prevent cellular inhibition of viral genome replication. Assembles an SCF-like E3 ubiquitin ligase complex based on the cellular proteins ELOB, ELOC, CUL5 and RBX1, in cooperation with viral E4orf6. This viral RING-type ligase ubiquitinates cellular substrates and targets them to proteasomal degradation: TP53/p53, LIG4, MRE11-RAD50-NBS1 (MRN) complex, ITGA3, DAXX and BLM. E1B-55K probably acts as the substrate-specific adapter of the SCF-like E3 ubiquitin ligase complex. Degradation of host TP53/p53 activity is essential for preventing E1A-induced TP53 accumulation that would otherwise lead to cell apoptosis and growth arrest. E1B-55K also inactivates TP53 transcription-factor activity by binding its transactivation domain. E1B-55K also functions as a SUMO1 E3 ligase for TP53 which causes the latter to be sequestered in promyelocytic leukemia (PML) nuclear bodies thereby contributing to maximal inhibition of TP53 function. This is E1B 55 kDa protein from Tree shrew adenovirus serotype 1 (TSAdV-1).